The chain runs to 353 residues: Quinolinate synthase (353 aa).

Positions 47 and 68 each coordinate iminosuccinate. Residue Cys-113 coordinates [4Fe-4S] cluster. Iminosuccinate-binding positions include 139–141 (YAN) and Ser-156. Residue Cys-200 coordinates [4Fe-4S] cluster. Residues 226–228 (HPE) and Thr-243 each bind iminosuccinate. Cys-297 contributes to the [4Fe-4S] cluster binding site.

It belongs to the quinolinate synthase family. Type 1 subfamily. Requires [4Fe-4S] cluster as cofactor.

It is found in the cytoplasm. The catalysed reaction is iminosuccinate + dihydroxyacetone phosphate = quinolinate + phosphate + 2 H2O + H(+). It functions in the pathway cofactor biosynthesis; NAD(+) biosynthesis; quinolinate from iminoaspartate: step 1/1. Its function is as follows. Catalyzes the condensation of iminoaspartate with dihydroxyacetone phosphate to form quinolinate. The chain is Quinolinate synthase from Serratia proteamaculans (strain 568).